The following is a 139-amino-acid chain: MSNRTLLAFDFGTKSIGVAIGQEITGTARALTSFKAQEGIPDWQKVEKLLSEWQPDLVVVGLPLNMDGTEQPLTARARKFANRLHGRFGVAIELHDERLSTVEARADLFERGGFKALDKGSVDAASAVIILESWFEAQH.

This sequence belongs to the YqgF nuclease family.

Its subcellular location is the cytoplasm. Functionally, could be a nuclease involved in processing of the 5'-end of pre-16S rRNA. This chain is Putative pre-16S rRNA nuclease, found in Pectobacterium atrosepticum (strain SCRI 1043 / ATCC BAA-672) (Erwinia carotovora subsp. atroseptica).